A 909-amino-acid polypeptide reads, in one-letter code: Epithelial discoidin domain-containing receptor 1 (909 aa).

The first 18 residues, 1–18, serve as a signal peptide directing secretion; it reads MGPEALSSLLLLLLVASG. Topologically, residues 21-413 are extracellular; the sequence is DMKGHFDPAK…VAKAEGSPTA (393 aa). In terms of domain architecture, F5/8 type C spans 31–181; the sequence is CRYALGMQDR…VCLRVELYGC (151 aa). Intrachain disulfides connect Cys-31–Cys-181 and Cys-70–Cys-173. Residues 45 to 60 are compositionally biased toward low complexity; that stretch reads SDISASSSWSDSTAAR. The segment at 45-65 is disordered; that stretch reads SDISASSSWSDSTAARHSSDG. The segment at 188 to 363 is DS-like domain; that stretch reads LSYTAPVGQT…LFSEISFISD (176 aa). Residues Asn-207, Gln-226, Asp-229, Val-231, Tyr-249, and Tyr-251 each contribute to the Ca(2+) site. N-linked (GlcNAc...) asparagine glycosylation is present at Asn-207. The N-linked (GlcNAc...) asparagine glycan is linked to Asn-256. Cys-299 and Cys-344 are joined by a disulfide. The Ca(2+) site is built by Ser-356 and Glu-357. N-linked (GlcNAc...) asparagine glycans are attached at residues Asn-366 and Asn-390. Residues 414 to 434 form a helical membrane-spanning segment; that stretch reads ILIGCLVAIILLLLLIIALML. Over 435–909 the chain is Cytoplasmic; that stretch reads WRLHWRRLLS…FLAEDALNTV (475 aa). Residues 466–495 form a disordered region; that stretch reads ILINNRPGPREPPPYQEPRPRGNPPHSAPC. Residues 475–492 are compositionally biased toward pro residues; sequence REPPPYQEPRPRGNPPHS. Positions 477-480 match the PPxY motif motif; it reads PPPY. Phosphotyrosine; by autocatalysis occurs at positions 480, 509, and 516. A Protein kinase domain is found at 606–901; the sequence is LRFKEKLGEG…PPFSQLHRFL (296 aa). 612–620 lines the ATP pocket; the sequence is LGEGQFGEV. Ser-627 bears the Phosphoserine mark. An ATP-binding site is contributed by Lys-651. The residue at position 736 (Tyr-736) is a Phosphotyrosine; by autocatalysis. The active-site Proton acceptor is Asp-762. 3 positions are modified to phosphotyrosine; by autocatalysis: Tyr-788, Tyr-792, and Tyr-793.

The protein belongs to the protein kinase superfamily. Tyr protein kinase family. Insulin receptor subfamily. Homodimer. Interacts (via PPxY motif) with WWC1 (via WW domains) in a collagen-regulated manner. Forms a tripartite complex with WWC1 and PRKCZ, but predominantly in the absence of collagen. Interacts (tyrosine phosphorylated) with SHC1. Interacts with SRC. Interacts with MYH9. Interacts with CDH1. Interacts with PTPN11. Interacts with NCK2. Post-translationally, autophosphorylated in response to fibrillar collagen binding.

The protein localises to the cell membrane. The catalysed reaction is L-tyrosyl-[protein] + ATP = O-phospho-L-tyrosyl-[protein] + ADP + H(+). Its function is as follows. Tyrosine kinase that functions as a cell surface receptor for fibrillar collagen and regulates cell attachment to the extracellular matrix, remodeling of the extracellular matrix, cell migration, differentiation, survival and cell proliferation. Collagen binding triggers a signaling pathway that involves SRC and leads to the activation of MAP kinases. Regulates remodeling of the extracellular matrix by up-regulation of the matrix metalloproteinases MMP2, MMP7 and MMP9, and thereby facilitates cell migration and wound healing. Promotes smooth muscle cell migration, and thereby contributes to arterial wound healing. Also plays a role in tumor cell invasion. Phosphorylates PTPN11. Required for normal blastocyst implantation during pregnancy, for normal mammary gland differentiation and normal lactation. Required for normal ear morphology and normal hearing. The sequence is that of Epithelial discoidin domain-containing receptor 1 (DDR1) from Pan troglodytes (Chimpanzee).